Consider the following 249-residue polypeptide: DNA repair protein RecO (249 aa).

The protein belongs to the RecO family.

In terms of biological role, involved in DNA repair and RecF pathway recombination. The polypeptide is DNA repair protein RecO (Polaromonas sp. (strain JS666 / ATCC BAA-500)).